The chain runs to 232 residues: MDLNTQRSKLYAQLQGQLIVSVQAPDGHAMRDTHTLTHVAAACVDGGAPAIRCGGYGGLEDIRSISNRVDVPVFGLTKEGSEGVYITPTRDSVRAVAESGATVVCADATFRPRPDGSTFAELVTVAHDSGILIMADCATPEEVLSAHKAGADFVSTTLAGYTEHREKTVGPDFDCLREARELVPDAFLIGEGRFSNPADVAHGRLIGANAIIVGTAITDPGFITGQFASLLH.

It belongs to the NanE family.

It catalyses the reaction an N-acyl-D-glucosamine 6-phosphate = an N-acyl-D-mannosamine 6-phosphate. It functions in the pathway amino-sugar metabolism; N-acetylneuraminate degradation; D-fructose 6-phosphate from N-acetylneuraminate: step 3/5. Functionally, converts N-acetylmannosamine-6-phosphate (ManNAc-6-P) to N-acetylglucosamine-6-phosphate (GlcNAc-6-P). This chain is Putative N-acetylmannosamine-6-phosphate 2-epimerase, found in Corynebacterium glutamicum (strain R).